The chain runs to 267 residues: Large ribosomal subunit protein uL4 (267 aa).

Belongs to the universal ribosomal protein uL4 family. In terms of assembly, part of the 50S ribosomal subunit.

Its function is as follows. One of the primary rRNA binding proteins, this protein initially binds near the 5'-end of the 23S rRNA. It is important during the early stages of 50S assembly. It makes multiple contacts with different domains of the 23S rRNA in the assembled 50S subunit and ribosome. In terms of biological role, forms part of the polypeptide exit tunnel. This Saccharolobus islandicus (strain Y.N.15.51 / Yellowstone #2) (Sulfolobus islandicus) protein is Large ribosomal subunit protein uL4.